The following is a 274-amino-acid chain: Large ribosomal subunit protein uL2 (274 aa).

2 disordered regions span residues 28 to 59 (APYA…GGHK) and 222 to 274 (GAAM…RRTK). Residues 39-49 (KSGGRNNNGRI) are compositionally biased toward polar residues. Over residues 229–239 (DHPHGGGEGRS) the composition is skewed to basic and acidic residues.

This sequence belongs to the universal ribosomal protein uL2 family. Part of the 50S ribosomal subunit. Forms a bridge to the 30S subunit in the 70S ribosome.

Its function is as follows. One of the primary rRNA binding proteins. Required for association of the 30S and 50S subunits to form the 70S ribosome, for tRNA binding and peptide bond formation. It has been suggested to have peptidyltransferase activity; this is somewhat controversial. Makes several contacts with the 16S rRNA in the 70S ribosome. This is Large ribosomal subunit protein uL2 from Marinomonas sp. (strain MWYL1).